The sequence spans 699 residues: Polyribonucleotide nucleotidyltransferase (699 aa).

2 residues coordinate Mg(2+): Asp485 and Asp491. In terms of domain architecture, KH spans 552 to 611 (PRITVIKINPEKIRDVIGKGGAVIRALTEETGTTIELEDDGTVKIASSNGEATKEAIRRI). The 69-residue stretch at 621–689 (GRIYNGKVIR…RQGRVRLSIK (69 aa)) folds into the S1 motif domain.

The protein belongs to the polyribonucleotide nucleotidyltransferase family. As to quaternary structure, component of the RNA degradosome, which is a multiprotein complex involved in RNA processing and mRNA degradation. The cofactor is Mg(2+).

It localises to the cytoplasm. It catalyses the reaction RNA(n+1) + phosphate = RNA(n) + a ribonucleoside 5'-diphosphate. Functionally, involved in mRNA degradation. Catalyzes the phosphorolysis of single-stranded polyribonucleotides processively in the 3'- to 5'-direction. The chain is Polyribonucleotide nucleotidyltransferase from Shewanella baltica (strain OS223).